The sequence spans 573 residues: Pyrophosphate--fructose 6-phosphate 1-phosphotransferase (573 aa).

Position 90 (G90) interacts with diphosphate. D184 contacts Mg(2+). Substrate is bound by residues T212–D214, K251–Y252, M259–R261, E320, and Y434–R437. D214 (proton acceptor) is an active-site residue.

This sequence belongs to the phosphofructokinase type A (PFKA) family. PPi-dependent PFK group II subfamily. Clade 'Long' sub-subfamily. Homodimer. It depends on Mg(2+) as a cofactor.

It is found in the cytoplasm. The enzyme catalyses beta-D-fructose 6-phosphate + diphosphate = beta-D-fructose 1,6-bisphosphate + phosphate + H(+). Its pathway is carbohydrate degradation; glycolysis; D-glyceraldehyde 3-phosphate and glycerone phosphate from D-glucose: step 3/4. With respect to regulation, non-allosteric. Functionally, catalyzes the phosphorylation of D-fructose 6-phosphate, the first committing step of glycolysis. Uses inorganic phosphate (PPi) as phosphoryl donor instead of ATP like common ATP-dependent phosphofructokinases (ATP-PFKs), which renders the reaction reversible, and can thus function both in glycolysis and gluconeogenesis. Consistently, PPi-PFK can replace the enzymes of both the forward (ATP-PFK) and reverse (fructose-bisphosphatase (FBPase)) reactions. The polypeptide is Pyrophosphate--fructose 6-phosphate 1-phosphotransferase (Treponema pallidum (strain Nichols)).